Consider the following 135-residue polypeptide: uncharacterized protein (135 aa).

Residues 4–24 (LGVFLILASIVCGVVAICGCT) traverse the membrane as a helical segment.

It localises to the membrane. This is an uncharacterized protein from Methanocaldococcus jannaschii (strain ATCC 43067 / DSM 2661 / JAL-1 / JCM 10045 / NBRC 100440) (Methanococcus jannaschii).